Consider the following 121-residue polypeptide: U15-barytoxin-Tl1b (121 aa).

A signal peptide spans 1-16; it reads MKLFMVLVASFAFAVA. Cystine bridges form between cysteine 54–cysteine 72, cysteine 65–cysteine 78, cysteine 69–cysteine 119, and cysteine 71–cysteine 90.

Belongs to the neurotoxin 03 (Tx2) family. 03 subfamily. As to expression, expressed by the venom gland.

It localises to the secreted. Ion channel inhibitor. The polypeptide is U15-barytoxin-Tl1b (Trittame loki (Brush-footed trapdoor spider)).